A 334-amino-acid chain; its full sequence is D-fructose 1,6-bisphosphatase class 2/sedoheptulose 1,7-bisphosphatase (334 aa).

4 residues coordinate Mn(2+): Asp33, Glu57, Asp85, and Glu88. Substrate is bound by residues 88–90, Tyr119, 164–166, and 186–188; these read EGT, RAR, and DGD. Residue Glu213 coordinates Mn(2+).

This sequence belongs to the FBPase class 2 family. As to quaternary structure, homotetramer. The cofactor is Mn(2+).

It catalyses the reaction beta-D-fructose 1,6-bisphosphate + H2O = beta-D-fructose 6-phosphate + phosphate. The enzyme catalyses D-sedoheptulose 1,7-bisphosphate + H2O = D-sedoheptulose 7-phosphate + phosphate. It functions in the pathway carbohydrate biosynthesis; Calvin cycle. Its function is as follows. Catalyzes the hydrolysis of fructose 1,6-bisphosphate (Fru 1,6-P2) and sedoheptulose 1,7-bisphosphate (Sed 1,7-P2) to fructose 6-phosphate and sedoheptulose 7-phosphate, respectively. The sequence is that of D-fructose 1,6-bisphosphatase class 2/sedoheptulose 1,7-bisphosphatase from Synechococcus sp. (strain RCC307).